The chain runs to 62 residues: DNA-directed RNA polymerase subunit Rpo10 (62 aa).

Residues C6, C9, C43, and C44 each contribute to the Zn(2+) site.

The protein belongs to the archaeal Rpo10/eukaryotic RPB10 RNA polymerase subunit family. In terms of assembly, part of the RNA polymerase complex. Zn(2+) serves as cofactor.

The protein resides in the cytoplasm. The catalysed reaction is RNA(n) + a ribonucleoside 5'-triphosphate = RNA(n+1) + diphosphate. DNA-dependent RNA polymerase (RNAP) catalyzes the transcription of DNA into RNA using the four ribonucleoside triphosphates as substrates. In Methanococcoides burtonii (strain DSM 6242 / NBRC 107633 / OCM 468 / ACE-M), this protein is DNA-directed RNA polymerase subunit Rpo10.